The following is a 285-amino-acid chain: Putative cysteine-rich repeat secretory protein 14 (285 aa).

The signal sequence occupies residues 1–30 (MSSFCLSKHLILVPILVMMAQLLLIRNVLS). 2 Gnk2-homologous domains span residues 37-143 (YLYH…SIST) and 161-273 (RPNA…RYPF).

This sequence belongs to the cysteine-rich repeat secretory protein family.

Its subcellular location is the secreted. In Arabidopsis thaliana (Mouse-ear cress), this protein is Putative cysteine-rich repeat secretory protein 14 (CRRSP14).